The sequence spans 126 residues: Small ribosomal subunit protein uS13 (126 aa).

The segment at 94–126 is disordered; the sequence is GLPVRGQKTRNNAHTVKGKPKAAIAGKKKNKVN. Over residues 109–126 the composition is skewed to basic residues; it reads VKGKPKAAIAGKKKNKVN.

Belongs to the universal ribosomal protein uS13 family. As to quaternary structure, part of the 30S ribosomal subunit. Forms a loose heterodimer with protein S19. Forms two bridges to the 50S subunit in the 70S ribosome.

Located at the top of the head of the 30S subunit, it contacts several helices of the 16S rRNA. In the 70S ribosome it contacts the 23S rRNA (bridge B1a) and protein L5 of the 50S subunit (bridge B1b), connecting the 2 subunits; these bridges are implicated in subunit movement. Contacts the tRNAs in the A and P-sites. This Aster yellows witches'-broom phytoplasma (strain AYWB) protein is Small ribosomal subunit protein uS13.